The following is a 151-amino-acid chain: S-ribosylhomocysteine lyase (151 aa).

Fe cation contacts are provided by His54, His58, and Cys121.

This sequence belongs to the LuxS family. In terms of assembly, homodimer. Fe cation is required as a cofactor.

The catalysed reaction is S-(5-deoxy-D-ribos-5-yl)-L-homocysteine = (S)-4,5-dihydroxypentane-2,3-dione + L-homocysteine. In terms of biological role, involved in the synthesis of autoinducer 2 (AI-2) which is secreted by bacteria and is used to communicate both the cell density and the metabolic potential of the environment. The regulation of gene expression in response to changes in cell density is called quorum sensing. Catalyzes the transformation of S-ribosylhomocysteine (RHC) to homocysteine (HC) and 4,5-dihydroxy-2,3-pentadione (DPD). This Clostridioides difficile (strain 630) (Peptoclostridium difficile) protein is S-ribosylhomocysteine lyase.